The sequence spans 534 residues: Cytochrome P450 714B1 (534 aa).

Position 1 (methionine 1) is a topological domain, lumenal. Residues 2-22 form a helical; Signal-anchor for type III membrane protein membrane-spanning segment; the sequence is VVVVAAAMAAASLCCGVAAYL. The Cytoplasmic portion of the chain corresponds to 23 to 534; that stretch reads YYVLWLAPER…RSKCDWAGFD (512 aa). A heme-binding site is contributed by cysteine 472.

Belongs to the cytochrome P450 family. Heme is required as a cofactor. Highly expressed in spikelet and uppermost internode. Detected in shoots, roots, leaves and anthers.

The protein localises to the membrane. Catalyzes the 13-hydroxylation of gibberellins (GAs). Determines the ratio of GA4 and GA1. Converts GA12 into GA53. The polypeptide is Cytochrome P450 714B1 (CYP714B1) (Oryza sativa subsp. japonica (Rice)).